The primary structure comprises 861 residues: Ataxin-7-like protein 1 (861 aa).

Disordered stretches follow at residues 1 to 31 (MTSE…AMAT), 154 to 189 (GHHS…KGSR), 342 to 448 (KSRE…GADE), 606 to 673 (PIPA…LSGP), and 772 to 861 (FDKS…RTLP). The SCA7 domain occupies 284-351 (RRLSEREFDP…KSREKEVKDK (68 aa)). Over residues 342–354 (KSREKEVKDKEHL) the composition is skewed to basic and acidic residues. Polar residues predominate over residues 355–369 (LTSTREILPSQSGPA). 3 stretches are compositionally biased toward low complexity: residues 372 to 381 (SLLGSSGSSG), 403 to 417 (SSAN…SNHS), and 606 to 616 (PIPAVIPSPSH). A compositionally biased stretch (basic residues) spans 617 to 627 (KPSKTKTSKSS). Residues 628-641 (KVKDLSTRSDESPS) show a composition bias toward basic and acidic residues. Composition is skewed to low complexity over residues 648-671 (QSST…SPLS) and 783-794 (SSSSSKACKITK). Positions 817–828 (VNSTSSRQVGKN) are enriched in polar residues. The segment covering 829-847 (SSLALSQSSPSSISSPGHS) has biased composition (low complexity).

The sequence is that of Ataxin-7-like protein 1 (ATXN7L1) from Homo sapiens (Human).